The chain runs to 244 residues: Carboxy-S-adenosyl-L-methionine synthase (244 aa).

S-adenosyl-L-methionine is bound by residues Tyr40, 65–67 (GCS), 90–91 (DN), 119–120 (DI), Asn134, and Arg201.

This sequence belongs to the class I-like SAM-binding methyltransferase superfamily. Cx-SAM synthase family. As to quaternary structure, homodimer.

It carries out the reaction prephenate + S-adenosyl-L-methionine = carboxy-S-adenosyl-L-methionine + 3-phenylpyruvate + H2O. Its function is as follows. Catalyzes the conversion of S-adenosyl-L-methionine (SAM) to carboxy-S-adenosyl-L-methionine (Cx-SAM). The polypeptide is Carboxy-S-adenosyl-L-methionine synthase (Geobacter sp. (strain M21)).